Consider the following 321-residue polypeptide: MLFATLEHILTHISFSTISIVITIHLITLLVRELGGLRDSSEKGMIATFFCITGFLVSRWASSGHFPLSNLYESLIFLSWALYILHMIPKIQNSKNDLSTITTPSTILTQGFATSGLLTEMHQSTILVPALQSQWLMMHVSMMLLSYATLLCGSLLSAALLMIRFRKNLDFFSKKKKNVLLKTFFFNEIEYFYAKRSALKSTFFPLFPNYYKYQLIERLDSWSYRVISLGFTLLTIGILCGAVWANEAWGSYWNWDPKETWAFITWTIFAIYLHSRTNPNWKGTKSAFVASIGFLIIWICYFGINLLGIGLHSYGSFTLPI.

Transmembrane regions (helical) follow at residues 9-29, 44-64, 68-88, 143-163, 226-246, 260-274, and 289-309; these read ILTH…LITL, GMIA…ASSG, LSNL…LHMI, MLLS…LLMI, VISL…VWAN, TWAF…IYLH, and VASI…LLGI.

Belongs to the CcmF/CycK/Ccl1/NrfE/CcsA family. As to quaternary structure, may interact with Ccs1.

Its subcellular location is the plastid. The protein localises to the chloroplast thylakoid membrane. In terms of biological role, required during biogenesis of c-type cytochromes (cytochrome c6 and cytochrome f) at the step of heme attachment. The protein is Cytochrome c biogenesis protein CcsA of Oryza sativa subsp. indica (Rice).